We begin with the raw amino-acid sequence, 208 residues long: Ribosomal RNA small subunit methyltransferase G (208 aa).

Residues glycine 76, leucine 81, 127 to 128 (VE), and arginine 142 each bind S-adenosyl-L-methionine.

This sequence belongs to the methyltransferase superfamily. RNA methyltransferase RsmG family.

Its subcellular location is the cytoplasm. It carries out the reaction guanosine(527) in 16S rRNA + S-adenosyl-L-methionine = N(7)-methylguanosine(527) in 16S rRNA + S-adenosyl-L-homocysteine. Specifically methylates the N7 position of guanine in position 527 of 16S rRNA. This is Ribosomal RNA small subunit methyltransferase G from Legionella pneumophila subsp. pneumophila (strain Philadelphia 1 / ATCC 33152 / DSM 7513).